Consider the following 622-residue polypeptide: Galactolipid galactosyltransferase SFR2, chloroplastic (622 aa).

Topologically, residues 1–3 (MEL) are stromal. A helical; Signal-anchor transmembrane segment spans residues 4 to 24 (FALLIKVAGLLATVTVGANVV). Residues 25-622 (SYSRFRRQNL…LHPALASPFD (598 aa)) lie on the Cytoplasmic side of the membrane. A beta-D-glucoside contacts are provided by residues His222, 266-267 (NE), Tyr377, Glu429, Trp467, 474-475 (EW), and Phe483. Glu267 serves as the catalytic Proton donor. The Nucleophile role is filled by Glu429.

Belongs to the glycosyl hydrolase 1 family. Expressed in hypocotyls, cotyledons, stems, leaves, pedicels, sepals, anthers and pistils. Limited expression in roots. Not detected in petals or filaments.

It is found in the plastid. It localises to the chloroplast. Its subcellular location is the chloroplast outer membrane. The enzyme catalyses 2 a 1,2-diacyl-3-O-(beta-D-galactosyl)-sn-glycerol = a 1,2-diacyl-3-O-[beta-D-galactosyl-(1-&gt;6)-beta-D-galactosyl]-sn-glycerol + a 1,2-diacyl-sn-glycerol. With respect to regulation, induced by MgCl(2). Its function is as follows. Glycosyl hydrolase family protein acting primarily as a highly specific galactosyltransferase. Synthesizes digalactosyldiacylglycerol from monogalactosyldiacylglycerol in the absence of UDP-galactose in vitro. Hydrolyzes o- and p-nitrophenyl beta-D-glucoside in vitro. Plays a role in freezing tolerance. May play a role in chloroplast protection. In Arabidopsis thaliana (Mouse-ear cress), this protein is Galactolipid galactosyltransferase SFR2, chloroplastic.